We begin with the raw amino-acid sequence, 57 residues long: Large ribosomal subunit protein eL20 (57 aa).

The protein belongs to the eukaryotic ribosomal protein eL20 family. Part of the 50S ribosomal subunit. Binds 23S rRNA.

The protein is Large ribosomal subunit protein eL20 of Natronomonas pharaonis (strain ATCC 35678 / DSM 2160 / CIP 103997 / JCM 8858 / NBRC 14720 / NCIMB 2260 / Gabara) (Halobacterium pharaonis).